The chain runs to 169 residues: Probable phospholipid hydroperoxide glutathione peroxidase (169 aa).

Cys43 is an active-site residue.

The protein belongs to the glutathione peroxidase family. Monomer. Has a tendency to form higher mass oligomers. Interacts with FUNDC1; this interaction promotes GPX4 recruitment into mitochondria through TOM/TIM complex where it is degraded by mitophagy.

Its subcellular location is the cytoplasm. The enzyme catalyses a hydroperoxy polyunsaturated fatty acid + 2 glutathione = a hydroxy polyunsaturated fatty acid + glutathione disulfide + H2O. In terms of biological role, protects cells and enzymes from oxidative damage, by catalyzing the reduction of hydrogen peroxide, lipid peroxides and organic hydroperoxide, by glutathione. In Solanum lycopersicum (Tomato), this protein is Probable phospholipid hydroperoxide glutathione peroxidase (GPXle-1).